Here is a 550-residue protein sequence, read N- to C-terminus: Arginine--tRNA ligase (550 aa).

The 'HIGH' region signature appears at 130-140 (ANPTGPIHIGG).

The protein belongs to the class-I aminoacyl-tRNA synthetase family. Monomer.

It localises to the cytoplasm. The catalysed reaction is tRNA(Arg) + L-arginine + ATP = L-arginyl-tRNA(Arg) + AMP + diphosphate. The chain is Arginine--tRNA ligase (argS) from Mycobacterium leprae (strain TN).